Reading from the N-terminus, the 91-residue chain is UPF0250 protein Psyr_4360 (91 aa).

The protein belongs to the UPF0250 family.

The sequence is that of UPF0250 protein Psyr_4360 from Pseudomonas syringae pv. syringae (strain B728a).